The primary structure comprises 186 residues: MKVIIGLGNIGKEYEKTRHNAGFIAIDLLLEKYNYSSVKQEFNSLIYTTIINNQKVLLVKPLTFMNNSGLAVRQIINFYKINLNDLIIIHDDKDLNISRIQFKKDGSSAGHNGIKSIINNLQTQNFYRLRIGVNQVPKEWKIVDWVLSKFSDEELNLLKQSFIDKIEFINDFTNNKTFIYLMNKYN.

Tyrosine 14 contacts tRNA. Catalysis depends on histidine 19, which acts as the Proton acceptor. The tRNA site is built by phenylalanine 64, asparagine 66, and asparagine 112.

The protein belongs to the PTH family. Monomer.

It localises to the cytoplasm. The enzyme catalyses an N-acyl-L-alpha-aminoacyl-tRNA + H2O = an N-acyl-L-amino acid + a tRNA + H(+). Its function is as follows. Hydrolyzes ribosome-free peptidyl-tRNAs (with 1 or more amino acids incorporated), which drop off the ribosome during protein synthesis, or as a result of ribosome stalling. In terms of biological role, catalyzes the release of premature peptidyl moieties from peptidyl-tRNA molecules trapped in stalled 50S ribosomal subunits, and thus maintains levels of free tRNAs and 50S ribosomes. The chain is Peptidyl-tRNA hydrolase from Mycoplasma mycoides subsp. mycoides SC (strain CCUG 32753 / NCTC 10114 / PG1).